The sequence spans 995 residues: Endosome/lysosome-associated apoptosis and autophagy regulator family member 2 (995 aa).

A signal peptide spans 1–21; sequence MGVFCWSGCLVISLQLLLGAA. Topologically, residues 22-895 are extracellular; sequence LDNLSTCKEE…ACESIDFWLK (874 aa). 9 N-linked (GlcNAc...) asparagine glycosylation sites follow: Asn24, Asn136, Asn245, Asn372, Asn527, Asn649, Asn683, Asn700, and Asn758. Residues 639 to 843 enclose the MRH domain; that stretch reads SECLVTYTNE…LWETAEACPL (205 aa). Disulfide bonds link Cys641/Cys687 and Cys697/Cys725. Cystine bridges form between Cys793-Cys829 and Cys805-Cys841. Asn883 is a glycosylation site (N-linked (GlcNAc...) asparagine). The helical transmembrane segment at 896-916 threads the bilayer; sequence VGAGVGAFTAVLLIALTCYFW. At 917-995 the chain is on the cytoplasmic side; sequence KKNQKLEYKY…QLKSSRAQNI (79 aa).

The protein belongs to the ELAPOR family. In terms of tissue distribution, expressed in the animal half of the embryo during gastrulation, becoming restricted to the ventral ectoderm at stage 12.5. At the neurula stage, expressed in the anterior ectoderm surrounding the neural plate, and weakly in the epidermis. Expression is especially high in the presumptive hatching gland and cement gland regions. Surprisingly, by the tailbud stage (stage 22), expression is limited to the hatching gland and is not seen in the cement gland. Conversely, in tadpoles expressed broadly in the head, heart and fin. Expression in the head is seen in the primary mouth and in the brain, eyes, otic vesicles and olfactory pits.

It is found in the cell membrane. Functionally, functions as a regulator of the BMP signaling pathway and is involved in epidermal differentiation. The protein is Endosome/lysosome-associated apoptosis and autophagy regulator family member 2 (elapor2) of Xenopus laevis (African clawed frog).